A 707-amino-acid chain; its full sequence is Golgin candidate 1 (707 aa).

The Cytoplasmic portion of the chain corresponds to 1-664 (MASWLKAAED…RATRFLWRYP (664 aa)). Disordered stretches follow at residues 22-106 (VVED…EIHP), 121-196 (VADT…SKRD), and 234-256 (QEPKVPVTSTNLKREQDRRADTT). Residues 38–47 (SGRKGSQGKR) show a composition bias toward low complexity. The segment covering 56-67 (VKEESSNKRDSS) has biased composition (basic and acidic residues). The span at 68 to 80 (GDQSGPGVSQSEV) shows a compositional bias: polar residues. Positions 83 to 95 (SKSSVSTDETSSS) are enriched in low complexity. Composition is skewed to basic and acidic residues over residues 139–150 (DGDRSESKHADG), 185–196 (TQRELDDSSKRD), and 245–254 (LKREQDRRAD). 2 coiled-coil regions span residues 287–424 (RVCA…NATK) and 452–608 (ADER…KSRV). Residues 665–685 (IARMFLLFYLVFVHLFLMYLI) traverse the membrane as a helical; Signal-anchor for type II membrane protein segment. Residues 686–707 (HRLQEQAEAQEVAAMTNNVFRL) lie on the Lumenal side of the membrane.

The protein resides in the golgi apparatus membrane. Its function is as follows. Golgi matrix protein playing a role in tethering of vesicles to Golgi membranes and in maintaining the overall structure of the Golgi apparatus. The sequence is that of Golgin candidate 1 (GC1) from Arabidopsis thaliana (Mouse-ear cress).